The following is a 569-amino-acid chain: Acyl-CoA transferase FVEG_12629 (569 aa).

Belongs to the CoA-transferase III family.

Acyl-CoA transferase; part of the Fusarium detoxification of benzoxazolinone cluster 2 (FDB2) involved in the degradation of benzoxazolinones produced by the host plant. Maize, wheat, and rye produce the 2 benzoxazinone phytoanticipins 2,4-dihy-droxy-7-methoxy-1,4-benzoxazin-3-one (DIMBOA) and 2,4-dihydroxy-1,4-benzoxazin-3-one (DIBOA) that, due to their inherent instability once released, spontaneously degrade to the more stable corresponding benzoxazolinones, 6-methoxy-2-benzoxazolinone (MBOA) and 2-benzoxazolinone (BOA), respectively. The first step in the detoxification of benzoxazolinones involves the hydrolysis of the cyclic ester bond of benzoxazolinones by the FDB1 cluster gamma-lactamase MBL1 to aminophenols. MBL1 is able to convert BOA into 2-aminophenol (2-AP), as well as MBOA into 5-methoxy-2-aminophenol (2-AMP). The FDB2 cluster N-malonyltransferase FDB2/NAT1 then metabolizes aminophenols via N-malonylation to non-toxic malonamic acids. FDB2/NAT1 converts 2-AP into N-(2-hydroxyphenyl) malonamic acid (HPMA) and 2-AMP into N-(2-hydroxy-4-methoxyphenyl) malonamic acid (HMPMA). The duplicated dienlactone hydrolases DLH1 and DLH2 may provide redundant function for hydrolyzing the lactone moiety in the BOA molecule. The roles of the amidases an other enzymes encoded by the 2 FDB clusters have not been identified so far. This is Acyl-CoA transferase FVEG_12629 from Gibberella moniliformis (strain M3125 / FGSC 7600) (Maize ear and stalk rot fungus).